The chain runs to 466 residues: Putative D-3-phosphoglycerate dehydrogenase (466 aa).

Positions 1-15 are enriched in basic and acidic residues; it reads MDIKGGRRGNVEDSL. Positions 1 to 26 are disordered; the sequence is MDIKGGRRGNVEDSLNKLSLSPPDNN. The span at 16-26 shows a compositional bias: polar residues; it reads NKLSLSPPDNN. Position 87 is a phosphoserine (Ser-87). NAD(+) is bound by residues 205-206 and Asp-225; that span reads HI. A Phosphoserine modification is found at Ser-258. NAD(+) contacts are provided by residues 282 to 284 and Asp-308; that span reads ASR. Residue Arg-284 is part of the active site. Glu-313 is an active-site residue. Residue His-344 is the Proton donor of the active site. An NAD(+)-binding site is contributed by 344–347; it reads HIGG. The ACT domain maps to 396 to 466; it reads RVLFVHRNVP…PCKINTRLLY (71 aa).

Belongs to the D-isomer specific 2-hydroxyacid dehydrogenase family.

The enzyme catalyses (2R)-3-phosphoglycerate + NAD(+) = 3-phosphooxypyruvate + NADH + H(+). The catalysed reaction is (R)-2-hydroxyglutarate + NAD(+) = 2-oxoglutarate + NADH + H(+). It participates in amino-acid biosynthesis; L-serine biosynthesis; L-serine from 3-phospho-D-glycerate: step 1/3. Its function is as follows. Catalyzes the reversible oxidation of 3-phospho-D-glycerate to 3-phosphonooxypyruvate, the first step of the phosphorylated L-serine biosynthesis pathway. Also catalyzes the reversible oxidation of 2-hydroxyglutarate to 2-oxoglutarate. The chain is Putative D-3-phosphoglycerate dehydrogenase from Schizosaccharomyces pombe (strain 972 / ATCC 24843) (Fission yeast).